The sequence spans 90 residues: [Phe8]-phyllolitorin (90 aa).

The N-terminal stretch at 1–30 is a signal peptide; that stretch reads MSAVPFTRVLLISGFLAHLLLSTFVTLTVC. Positions 31–48 are excised as a propeptide; that stretch reads KEVTEESDDLSKRNVLQR. Gln49 carries the post-translational modification Pyrrolidone carboxylic acid. Met57 carries the methionine amide modification. A propeptide spanning residues 61–90 is cleaved from the precursor; sequence SLENTNRRSDEDMEISALFRGSPLKVKRSD.

Belongs to the bombesin/neuromedin-B/ranatensin family. In terms of tissue distribution, expressed by the skin glands.

It localises to the secreted. The chain is [Phe8]-phyllolitorin from Phyllomedusa sauvagei (Sauvage's leaf frog).